We begin with the raw amino-acid sequence, 151 residues long: Cysteine proteinase inhibitor 10 (151 aa).

Residues 1 to 22 (MATSPMLFLVSLLLVLVAAATG) form the signal peptide. The region spanning 40–109 (GGRTEIRDVG…GVAYYLKVAA (70 aa)) is the Cystatin domain. The Secondary area of contact signature appears at 96–100 (QVVSG).

This sequence belongs to the cystatin family. Phytocystatin subfamily.

The protein resides in the secreted. Its function is as follows. Specific inhibitor of cysteine proteinases. Probably involved in the regulation of endogenous processes and in defense against pests and pathogens. The protein is Cysteine proteinase inhibitor 10 of Oryza sativa subsp. indica (Rice).